The primary structure comprises 541 residues: Protein ST7 homolog (541 aa).

Residues 15–35 (FYVALTGTSSLISGLILIFEW) form a helical membrane-spanning segment. Residues 62 to 116 (DAQSDSSNGSGSSTSSGSSSSSNGGGGGGGGGAGGGGPGAGGGTNSTTTTGTQMP) form a disordered region. The segment covering 67–83 (SSNGSGSSTSSGSSSSS) has biased composition (low complexity). A compositionally biased stretch (gly residues) spans 84–105 (NGGGGGGGGGAGGGGPGAGGGT). Residues 476–496 (LPFFILFTAGLCSFTALLALL) traverse the membrane as a helical segment.

Belongs to the ST7 family.

It is found in the membrane. The chain is Protein ST7 homolog from Drosophila pseudoobscura pseudoobscura (Fruit fly).